The chain runs to 273 residues: Large ribosomal subunit protein uL2cz/uL2cy (273 aa).

Disordered stretches follow at residues 1–27 and 225–273; these read MAKH…SNPR and PVDH…RRRK.

It belongs to the universal ribosomal protein uL2 family. Part of the 50S ribosomal subunit.

It localises to the plastid. The protein localises to the chloroplast. The sequence is that of Large ribosomal subunit protein uL2cz/uL2cy (rpl2-A) from Lolium perenne (Perennial ryegrass).